A 230-amino-acid polypeptide reads, in one-letter code: RNA chaperone ProQ (230 aa).

The tract at residues 104 to 176 (AEAKARVQAQ…APRQNTEKLT (73 aa)) is disordered. The span at 115 to 132 (AEQRAKKREAEGDKETSK) shows a compositional bias: basic and acidic residues.

This sequence belongs to the ProQ family.

The protein resides in the cytoplasm. Functionally, RNA chaperone with significant RNA binding, RNA strand exchange and RNA duplexing activities. May regulate ProP activity through an RNA-based, post-transcriptional mechanism. In Proteus mirabilis (strain HI4320), this protein is RNA chaperone ProQ.